The chain runs to 1070 residues: Protocadherin-8 (1070 aa).

The N-terminal stretch at 1 to 29 (MSPAKRWGSPCLFPLQLFSLCWVLSVAQS) is a signal peptide. Cadherin domains follow at residues 30–135 (KTVR…APRF), 136–245 (PRAQ…SPAF), 247–354 (QGAV…APEI), 393–497 (QEAG…APIF), 498–609 (TKPV…SPIL), and 615–721 (ANGS…VPAS). Residues 30-747 (KTVRYSTFEE…SGPSLQWDTP (718 aa)) are Extracellular-facing. The N-linked (GlcNAc...) asparagine glycan is linked to Asn-616. Positions 716–725 (SAVPASSGSP) are enriched in low complexity. Residues 716–740 (SAVPASSGSPEHSRPPGSRLAPSGP) form a disordered region. Residues 748–768 (LIVIIVLAGSCTLLLAAIIAI) form a helical membrane-spanning segment. Topologically, residues 769 to 1070 (ATTCNRRKKE…SPKKGINENV (302 aa)) are cytoplasmic. Disordered stretches follow at residues 777 to 859 (KEVR…TGES), 906 to 928 (REAEKFSGKDSGKGDSDFNDSDS), and 1046 to 1070 (IGVPLYESPPGSRYVSPKKGINENV). Basic and acidic residues-rich tracts occupy residues 780-790 (RKGGALREERP) and 906-921 (REAEKFSGKDSGKGDS). Ser-1053 carries the phosphoserine modification.

The N-terminal extracellular domain forms homophilic interactions; these interactions activate p38 MAPK via TAOK2 and trigger endocytosis. Interacts with CDH2; this interaction may lead to CDH2 cointernalization. Interacts with CDH11. Interacts with TAOK2.

It is found in the cell membrane. Its subcellular location is the cell projection. The protein localises to the dendrite. The protein resides in the presynaptic cell membrane. It localises to the postsynaptic cell membrane. Calcium-dependent cell-adhesion protein. May play a role in activity-induced synaptic reorganization underlying long term memory. Could be involved in CDH2 internalization through TAOK2/p38 MAPK pathway. In hippocampal neurons, may play a role in the down-regulation of dendritic spines, maybe through its action on CDH2 endocytosis. The polypeptide is Protocadherin-8 (Pcdh8) (Mus musculus (Mouse)).